Reading from the N-terminus, the 236-residue chain is Osmoprotectant import permease protein OsmY (236 aa).

Helical transmembrane passes span 9-29 (VLGF…GIGL), 47-67 (LMLV…SGIL), 95-115 (VLAL…VALF), 126-146 (TYAG…GIGM), 180-200 (PLAF…GIYL), and 207-227 (ILGA…LAWF). One can recognise an ABC transmembrane type-1 domain in the interval 43 to 224 (GQRHLMLVFT…LFALILDTLL (182 aa)).

The protein belongs to the binding-protein-dependent transport system permease family. In terms of assembly, the complex is composed of two ATP-binding proteins (OsmV), two transmembrane proteins (OsmW and OsmY) and a solute-binding protein (OsmX).

The protein localises to the cell inner membrane. Its function is as follows. Part of the OsmU ABC transporter complex, which is involved in the uptake of osmoprotectants such as choline-O-sulfate and glycine betaine. Probably responsible for the translocation of the substrate across the membrane. The sequence is that of Osmoprotectant import permease protein OsmY (osmY) from Salmonella typhimurium (strain LT2 / SGSC1412 / ATCC 700720).